The sequence spans 757 residues: Large ribosomal subunit protein mL102 (rPPR5) (757 aa).

Residues 39–55 (EETQTPANANPETQSPD) show a composition bias toward polar residues. The segment at 39 to 82 (EETQTPANANPETQSPDAKSETKKNLTSTETRPLRERFQRGKRQ) is disordered. Residues 70 to 82 (RPLRERFQRGKRQ) are compositionally biased toward basic and acidic residues. PPR repeat units follow at residues 149 to 183 (DRDT…GVPW), 184 to 218 (DEDM…GVER), 219 to 253 (TIKS…GVEP), 254 to 288 (TRHT…GISP), 289 to 323 (DDAT…KIGP), 324 to 358 (SVVS…GIEP), 359 to 393 (NATT…HIAP), 395 to 429 (DNSI…NVPA), 430 to 464 (EAGH…EIIL), 473 to 507 (EPSA…GVQD), 510 to 541 (ALNN…GVPR), 542 to 576 (ESNA…GHVP), 577 to 611 (DSSL…NVGI), 614 to 648 (NMDL…GHTA), 651 to 680 (DSLL…DLSL), and 681 to 715 (EFSS…GSST).

This sequence belongs to the PPR family. P subfamily. As to quaternary structure, component of the mitochondrial ribosome large subunit.

The protein resides in the mitochondrion. The sequence is that of Large ribosomal subunit protein mL102 (rPPR5) from Arabidopsis thaliana (Mouse-ear cress).